The following is a 221-amino-acid chain: MSLNNLNKKENFISIQLLSENWAEELRLSIKGYQKGFIKINSGALPLTCKDINELKRICNGVGMEIISIESTNAESIVSASALGLNANLKLKDNVFTEVKSDFKDLSESKVNAALLFHKGTLRSGEVLEADEDILILGDVNPGATVLAGGNVMIWGRLLGIAHAGKYGNNQAKITALQLRPVQLRIANKIARGPKEKPELGLAEEATIQEEVIVIKPARTT.

Belongs to the MinC family. Interacts with MinD and FtsZ.

In terms of biological role, cell division inhibitor that blocks the formation of polar Z ring septums. Rapidly oscillates between the poles of the cell to destabilize FtsZ filaments that have formed before they mature into polar Z rings. Prevents FtsZ polymerization. The polypeptide is Probable septum site-determining protein MinC (Prochlorococcus marinus (strain SARG / CCMP1375 / SS120)).